Consider the following 238-residue polypeptide: Ribonuclease PH (238 aa).

Residues R86 and 124-126 each bind phosphate; that span reads GTR.

It belongs to the RNase PH family. As to quaternary structure, homohexameric ring arranged as a trimer of dimers.

The catalysed reaction is tRNA(n+1) + phosphate = tRNA(n) + a ribonucleoside 5'-diphosphate. Its function is as follows. Phosphorolytic 3'-5' exoribonuclease that plays an important role in tRNA 3'-end maturation. Removes nucleotide residues following the 3'-CCA terminus of tRNAs; can also add nucleotides to the ends of RNA molecules by using nucleoside diphosphates as substrates, but this may not be physiologically important. Probably plays a role in initiation of 16S rRNA degradation (leading to ribosome degradation) during starvation. The chain is Ribonuclease PH from Aliivibrio fischeri (strain ATCC 700601 / ES114) (Vibrio fischeri).